Reading from the N-terminus, the 585-residue chain is Protein FAM13C (585 aa).

3 disordered regions span residues 26–45 (PVSL…ENNK), 83–138 (SMGN…NAFK), and 171–216 (EAAQ…APED). Composition is skewed to basic and acidic residues over residues 27 to 45 (VSLH…ENNK) and 99 to 112 (ESGR…ETEH). Position 131 is a phosphoserine (Ser-131). Ser-238 is modified (phosphoserine). Disordered regions lie at residues 250–282 (FNLD…DGKE), 349–391 (EEQG…EETP), and 441–477 (IPTI…DHLT). Positions 262 to 275 (STQQFMMPRSSSRC) are enriched in polar residues. Ser-385 and Ser-386 each carry phosphoserine.

It belongs to the FAM13 family.

The chain is Protein FAM13C (FAM13C) from Homo sapiens (Human).